The sequence spans 613 residues: Lysophospholipase 1 (613 aa).

The N-terminal stretch at 1 to 21 (MLFRGLSLWMLFLASCLSALA) is a signal peptide. A PLA2c domain is found at 55 to 593 (DCPSDNIVES…YNYCWSGLYD (539 aa)). N-linked (GlcNAc...) asparagine glycosylation is found at N142, N173, N220, N244, N281, N319, N348, N365, N494, N499, N523, N551, and N572.

It belongs to the lysophospholipase family.

The protein resides in the secreted. It catalyses the reaction a 1-acyl-sn-glycero-3-phosphocholine + H2O = sn-glycerol 3-phosphocholine + a fatty acid + H(+). Catalyzes the release of fatty acids from lysophospholipids. Required for survival under high osmolarity, for normal osmotic stress-induced gene expression, and for nutrient-mediated repression of sexual differentiation. The polypeptide is Lysophospholipase 1 (plb1) (Schizosaccharomyces pombe (strain 972 / ATCC 24843) (Fission yeast)).